We begin with the raw amino-acid sequence, 91 residues long: Acylphosphatase (91 aa).

The Acylphosphatase-like domain occupies 6 to 91 (CMRCYISGRV…WEDYITFDVL (86 aa)). Active-site residues include R21 and N39.

It belongs to the acylphosphatase family.

It catalyses the reaction an acyl phosphate + H2O = a carboxylate + phosphate + H(+). The polypeptide is Acylphosphatase (acyP) (Legionella pneumophila (strain Lens)).